A 144-amino-acid chain; its full sequence is Putative pre-16S rRNA nuclease (144 aa).

This sequence belongs to the YqgF nuclease family.

Its subcellular location is the cytoplasm. In terms of biological role, could be a nuclease involved in processing of the 5'-end of pre-16S rRNA. In Mycoplasma mobile (strain ATCC 43663 / 163K / NCTC 11711) (Mesomycoplasma mobile), this protein is Putative pre-16S rRNA nuclease.